The primary structure comprises 508 residues: MAIAMIPKTMSTQHPDNAKMPAWASEKSMIRNDDEVEEAYQCYTIGIKEVMWDAEGKDVDTHVLRKLISKNHEFFEKNVLGSDIFLTYRVPNPAIEGTERKVLTETLESIPVNYDVFNTVYKRDIPPIFEVILPFTTSSKDLLNIAKYYEKAVAARDEIELYDNVMVKNILGETKPKKINIIPLIEDKDSMFNIDGIVKNFARAVSAKKMRVFIARSDPAMNYGMIPAVLMSKYAASRLCKMNDDIENYPIVGVGSSTFRGRFSPENIEKSLYEYSNYYTFTLQSAFKYDYPQDSVKNSINIINRHERSFDYLEDYEEEIIKNAVNKYVINYQKIIEKLAPAINNITMYLPKRRSRKLHIGLFGYSRSTGNVTLPRAISFVGAMYSMGLPPEIIGISSLLNMKDDELDIIEKTYINLRSDIMESSSYLNYEVFDALKDVYKIDQETINMIKADVKYIENNYGIKSDLGYERERHNYLSSLMNLAFKNHDFENTRKYILDMALIRKFIG.

The protein belongs to the PEPCase type 2 family. Homotetramer. The cofactor is Mg(2+).

The catalysed reaction is oxaloacetate + phosphate = phosphoenolpyruvate + hydrogencarbonate. Functionally, catalyzes the irreversible beta-carboxylation of phosphoenolpyruvate (PEP) to form oxaloacetate (OAA), a four-carbon dicarboxylic acid source for the tricarboxylic acid cycle. The polypeptide is Phosphoenolpyruvate carboxylase (Picrophilus torridus (strain ATCC 700027 / DSM 9790 / JCM 10055 / NBRC 100828 / KAW 2/3)).